The primary structure comprises 69 residues: Snake venom metalloproteinase BnP2 (69 aa).

The region spanning 1-69 (YIELAVVADH…EWRERDIIPR (69 aa)) is the Peptidase M12B domain. Ca(2+) is bound at residue Glu3.

The protein belongs to the venom metalloproteinase (M12B) family. P-I subfamily. Monomer. The cofactor is Zn(2+). In terms of tissue distribution, expressed by the venom gland.

The protein resides in the secreted. With respect to regulation, inhibited by EDTA. Functionally, this protein is a zinc protease from snake venom that is devoid of significant myotoxic and hemorrhagic activities. It hydrolyzes the Aalpha-chain and more slowly the Bbeta-chain of fibrin and fibrinogen, without affecting the gamma-chains. It induces cell detachment and a apoptosis (anoikis) in endothelial cells. This Bothrops pauloensis (Neuwied's lancehead) protein is Snake venom metalloproteinase BnP2.